We begin with the raw amino-acid sequence, 111 residues long: Protein GLUTAMINE DUMPER 6 (111 aa).

At 1 to 16 the chain is on the extracellular side; sequence MRPTPKVEIWKSPVPY. The helical transmembrane segment at 17–37 threads the bilayer; sequence LFGGLFLLVLLIALALLSLVC. The Cytoplasmic portion of the chain corresponds to 38–111; sequence THQKPSSSSN…NCDNVTVIST (74 aa). Residues 40–49 are compositionally biased toward polar residues; the sequence is QKPSSSSNNN. The segment at 40–63 is disordered; it reads QKPSSSSNNNHMDEEDDVGDKDAK. The VIMAG; degenerate signature appears at 75-79; that stretch reads VILAG.

The protein belongs to the GLUTAMINE DUMPER 1 (TC 9.B.60) family. Expressed in the vascular tissues.

The protein localises to the membrane. In terms of biological role, probable subunit of an amino acid transporter involved in the regulation of the amino acid metabolism. Stimulates amino acid export by activating nonselective amino acid facilitators. This Arabidopsis thaliana (Mouse-ear cress) protein is Protein GLUTAMINE DUMPER 6 (GDU6).